Reading from the N-terminus, the 380-residue chain is Cytochrome b (380 aa).

A run of 4 helical transmembrane segments spans residues 34 to 54 (FGSLLGLCLVSQILTGLFLAM), 78 to 99 (WLLRNLHANGASFMFICLYMHI), 114 to 134 (WNIGVMLLVLTMATAFLGYVL), and 179 to 199 (FFAFHFFLPFMIAGLSVVHLL). H84 and H98 together coordinate heme b. The heme b site is built by H183 and H197. H202 lines the a ubiquinone pocket. 4 consecutive transmembrane segments (helical) span residues 227–247 (YKDVVGFVVLLAGLVFIALFS), 289–309 (LGGVVALAMSIVVLFFMPFVH), 321–341 (LAQVLFWLMVVNVLLLTWLGG), and 348–368 (YIFLGQAASVIYFVNILLLIP).

This sequence belongs to the cytochrome b family. In terms of assembly, the cytochrome bc1 complex contains 3 respiratory subunits (MT-CYB, CYC1 and UQCRFS1), 2 core proteins (UQCRC1 and UQCRC2) and probably 6 low-molecular weight proteins. It depends on heme b as a cofactor.

Its subcellular location is the mitochondrion inner membrane. Component of the ubiquinol-cytochrome c reductase complex (complex III or cytochrome b-c1 complex) that is part of the mitochondrial respiratory chain. The b-c1 complex mediates electron transfer from ubiquinol to cytochrome c. Contributes to the generation of a proton gradient across the mitochondrial membrane that is then used for ATP synthesis. In Branchiostoma floridae (Florida lancelet), this protein is Cytochrome b (MT-CYB).